Consider the following 428-residue polypeptide: MTQILEVTAREILDSRGNPTVEVDVYTESGAIGRAAVPSGASTGTREALELRDKKSKRYGGKGVAQAVKNVNEIIAPLIIGMDAADQAAVDLAMLDEDGTENKSKLGANAILGVSLATARAAADAFGFPLYRYLGGVAGQTLPLPMMNIINGGEHAANNLDIQEFMIIPKGAKTAAEAVRMGAEVFANLKAILKKGGHATAVGDEGGFAPDLDTNEEAFKCIMDAIKAAGYKAGKDIVLAIDAAASEFCVKGKYELKGEGKSLTTTQMIDYYEEMISKYPIVSIEDGLAEGDWDGWGEMTQRLGSIQLVGDDIFVTNPSIFRKGIEKGVGNSILVKLNQIGSLTETLQTIDLAKRYGYTTVISHRSGETEDTFISDLAVAVNAGQIKTGSLSRTDRVAKYNQLIRIEEDLGRAASFGTPFDKITDSKK.

Gln163 provides a ligand contact to (2R)-2-phosphoglycerate. The Proton donor role is filled by Glu205. Mg(2+) contacts are provided by Asp242, Glu285, and Asp311. Residues Lys336, Arg365, Ser366, and Lys387 each contribute to the (2R)-2-phosphoglycerate site. The active-site Proton acceptor is the Lys336.

This sequence belongs to the enolase family. The cofactor is Mg(2+).

The protein localises to the cytoplasm. It is found in the secreted. It localises to the cell surface. The catalysed reaction is (2R)-2-phosphoglycerate = phosphoenolpyruvate + H2O. The protein operates within carbohydrate degradation; glycolysis; pyruvate from D-glyceraldehyde 3-phosphate: step 4/5. Functionally, catalyzes the reversible conversion of 2-phosphoglycerate (2-PG) into phosphoenolpyruvate (PEP). It is essential for the degradation of carbohydrates via glycolysis. This Desulfatibacillum aliphaticivorans protein is Enolase.